Here is a 235-residue protein sequence, read N- to C-terminus: Protein GrpE (235 aa).

Residues 1–18 show a composition bias toward polar residues; it reads MTDGNQKPDGNSGEQVTV. 2 disordered regions span residues 1–50 and 198–235; these read MTDG…DAAH and ESVD…PSGS. Residues 19–35 show a composition bias toward basic and acidic residues; sequence TDKRRIDPETGEVRHVP. The span at 215-235 shows a compositional bias: polar residues; the sequence is ADQGNSADTSGEQAESEPSGS.

Belongs to the GrpE family. In terms of assembly, homodimer.

The protein localises to the cytoplasm. Functionally, participates actively in the response to hyperosmotic and heat shock by preventing the aggregation of stress-denatured proteins, in association with DnaK and GrpE. It is the nucleotide exchange factor for DnaK and may function as a thermosensor. Unfolded proteins bind initially to DnaJ; upon interaction with the DnaJ-bound protein, DnaK hydrolyzes its bound ATP, resulting in the formation of a stable complex. GrpE releases ADP from DnaK; ATP binding to DnaK triggers the release of the substrate protein, thus completing the reaction cycle. Several rounds of ATP-dependent interactions between DnaJ, DnaK and GrpE are required for fully efficient folding. This chain is Protein GrpE, found in Mycobacterium tuberculosis (strain ATCC 25177 / H37Ra).